We begin with the raw amino-acid sequence, 2357 residues long: MQPPPQAVPSGVAGPPPAGNPRSMFWANSPYRKPANNAPVAPITRPLQPVTDPFAFNRQTLQNTPVGSSSKSSLPNLPGPALSVFSQWPGLPVTPTNAGDSSTGLHEPLSGTLSQPRADASLFPPASTPSSLPGLEVSRNAEADPSSGHEVQMLPHSAHYIPGVGPEQPLGGQMNDSGSGPDQPMNRHAPHDGAVTHAASPFLPQPQMPGQWGPAQGGPQPSYQHHSPYLEGPVQNMGLQAASLPHFPPPSSLHQGPGHESHAPQTFTPASLASGEGNEIVHQQSKNHPLSSFPPKHTFEQNSRIGNMWASPELKQNPGVNKEHLLDPAHVNPFTQGNSPENQAHHPPVAATNHALQEAASGALSMFFQGEETENEENLSSEKAGLDKRLNLDSFSSTSRLGHPPPPGASGVYQAFPRGPSSEAAQEGDAQPYFSQSVGVRLDKQSTVPPANDAWGDVPGTGTRCASGPQCENVENLEFVQNQEVLPRETLSVDPFPLSDQIRYGPLPGPAASRPATVGLTRGGGLNLEAPDTPLHPTRPDSVSSSYSSHSHRSPPGSARPQELVGTFIQQEVGKLEDDTSGSFFKQIDSSPVGGETDEVTGSQNCCSSLSQPSTPSPPKPTGVFQTSANSSFEPVKSHLVGVKPVEADRANMVVEVRGTQYCPKKRRAAVAPPDATSGNLEQPPDNMETPCAPQACPLPLSTTGEAGQLVSNTAGTPLDTVRPVPDKRPSARAQGPVKCESPATTLWAQNELPDFGGNVLLAPAAPALYVPVKPKPSEVVHHPEKGMSGQKAWKQGSVPPLQNQDPPGASENLENPPKVGEEEALPVQASSGYASLLSSPPTESLHNQPVLIAQPDQSYNLAQPINFSVSLLNPNEKNQSWGDAVVGERSIVSNNWALGGDPEERAALSGVPASAVTGASLPSSIPQNCAPQGSGSSEMIASQSASWLVQQLSPQTPQSPHPNAEKGPSEFVSSPAGNTSVMLVPPASSTLVPNSNKAKHSSNQEEAVGALDFTLNRTLENPVRMYSPSPSDGPASQQPLPNHPRQSGPGLHNQDHFYQQVTKDAQDQHRLERAQPELVPPRPQNSPQVPQASCPEPSNPESPPTQGQSESLAQPPASPASVNTGQLLPQPPQASSASVTSTNSSQAAVRSEQLWLHPPPPNTFGPAPQDLASYYYYRPLYDAYQSQYPSPYPSDPGTASLYYQDMYGLYEPRYRPYDSSASAYAENHRYSEPERPSSRASHYSDQLAPRQGYPEGYYNSKSGWSSHSDYYANYYSGQYDYGDPSRWDRYYGSRLRDPRTWDRRYWYDSEHDPYRKDHYAYSDRPEKCDDHWRYDPRFTGSFDDDAEIHRDPYGEEADRRSIHSEHSARSLRSTHSLPSRRSSLSSHSHQSQIYRSHHVTGGSFEAPHAPGSFHGDYAYGTYASNFSGAHGFPEYSYPADTSWPAVEQVPSRPTSPEKFTVPHVCARFGPGGQLLKVIPNLPSEGQPALVEIHSLETLLQHTPEQEEMRSFPGPLGKDDTHKVDVINFAQNKATKCLQNESLIDKESASLLWKFIILLCRQNGTVVGTDIAELLLRDHRTVWLPGKSPNEANLIDFTNEAVEQVEEEESGEAQLSFLTDSQTVTTSVLEKETERFRELLLYGRKKDALESAMKNGLWGHALLLASKMDSRTHARVMTRFANSLPINDPLQTVYQLMSGRMPAASTCCGDEKWGDWRPHLAMVLSNLNNNMDVESRTMATMGDTLASKGLLDAAHFCYLMAQVGFGVYTKKTTKLVLIGSNHSLPFLKFATNEAIQRTEAYEYAQSLGAHTCSLPNFQVFKFIYLCRLAEMGLATQAFHYCEVIAKSVLTQPGAYSPVLISQLTQMASQLRLFDPQLKEKPEEESFVEPAWLVQLQHVERQIQEGTVLWSQDGTEPQQCRITSGSEVEQSDGPGLNQQAGPQADNPLLMPSTEPLMHGVQLLPTAPQTLPDGQPAHLSRVPMFPVPMSRGPLELSPAYGPPGSALGFPESSRSDPAVLHPGQALPPTTLSLQESGLPPQEAKSPDPEMVPRGSPVRHSPPELSQEEFGESFADPGSSRTAQDLETSPVWDLGSSSLTRAPSLTSDSEGKKPAQAVKKEPKEPKKTESWFSRWLPGKKRTEAYLPDDKNKSIVWDEKKNQWVNLNEPEEEKKAPPPPPTSFPRVPQVAPTGPAGPPTASVNVFSRKAGGSRARYVDVLNPSGTQRSEPALAPADFFAPLAPLPIPSNLFVPNPDAEEPQPADGTGCRGQAPAGTQSKAESTLEPKVGSSTVSAPGPELLPSKPDGSQGGEAPGDHCPTGAPHGGSVPFYNPAQLVQASVTSGNSRPGRIGQRKYAALN.

Disordered stretches follow at residues 1–225 (MQPP…SYQH), 240–347 (QAAS…AHHP), 394–463 (SFSS…GTGT), 504–562 (YGPL…ARPQ), 579–630 (DTSG…TSAN), 666–689 (KRRA…DNME), 714–739 (TAGT…GPVK), 778–820 (SEVV…PPKV), 917–1008 (VTGA…QEEA), 1023–1055 (PVRM…LHNQ), and 1076–1151 (QPEL…AAVR). 2 stretches are compositionally biased toward polar residues: residues 57-75 (NRQT…SSLP) and 94-104 (TPTNAGDSSTG). The segment covering 208–221 (MPGQWGPAQGGPQP) has biased composition (low complexity). Polar residues predominate over residues 281-290 (VHQQSKNHPL). A Phosphoserine modification is found at serine 311. Residues 333–342 (PFTQGNSPEN) are compositionally biased toward polar residues. Positions 540 to 561 (PDSVSSSYSSHSHRSPPGSARP) are enriched in low complexity. Serine 581, serine 591, serine 609, serine 611, and serine 614 each carry phosphoserine. Residues 581-590 (SGSFFKQIDS) are compositionally biased toward polar residues. A Phosphothreonine modification is found at threonine 615. The residue at position 617 (serine 617) is a Phosphoserine. Composition is skewed to polar residues over residues 921-959 (SLPS…QTPQ), 972-997 (FVSS…PNSN), and 1029-1041 (PSPS…QQPL). Residues 1037 to 1905 (SQQPLPNHPR…QHVERQIQEG (869 aa)) form a required for localization to endoplasmic reticulum exit sites region. Phosphoserine is present on serine 1087. The segment at 1118-1415 (ASPASVNTGQ…EAPHAPGSFH (298 aa)) is interaction with MIA3. The interval 1119-1420 (SPASVNTGQL…PGSFHGDYAY (302 aa)) is required for endoplasmic reticulum localization. Residues 1134-1150 (QASSASVTSTNSSQAAV) show a composition bias toward low complexity. The residue at position 1223 (serine 1223) is a Phosphoserine. The interval 1226-1253 (AENHRYSEPERPSSRASHYSDQLAPRQG) is disordered. Residues 1227-1238 (ENHRYSEPERPS) are compositionally biased toward basic and acidic residues. A Phosphoserine modification is found at serine 1245. At threonine 1340 the chain carries Phosphothreonine. Phosphoserine occurs at positions 1342, 1362, 1365, 1371, 1374, 1377, 1384, 1588, and 1616. The segment at 1344–1395 (DDDAEIHRDPYGEEADRRSIHSEHSARSLRSTHSLPSRRSSLSSHSHQSQIY) is disordered. The span at 1348-1369 (EIHRDPYGEEADRRSIHSEHSA) shows a compositional bias: basic and acidic residues. The segment covering 1371–1392 (SLRSTHSLPSRRSSLSSHSHQS) has biased composition (low complexity). The central conserved domain (CCD); mediates interaction with RNF183, LRRK2 and SEC13 stretch occupies residues 1449–1905 (QVPSRPTSPE…QHVERQIQEG (457 aa)). Positions 1907–1943 (VLWSQDGTEPQQCRITSGSEVEQSDGPGLNQQAGPQA) are disordered. Residues 1908-1927 (LWSQDGTEPQQCRITSGSEV) show a composition bias toward polar residues. The residue at position 1922 (threonine 1922) is a Phosphothreonine. Residues serine 1951, serine 2043, serine 2063, serine 2077, and serine 2094 each carry the phosphoserine modification. 3 disordered regions span residues 1993 to 2141 (ELSP…RTEA), 2156 to 2198 (KKNQ…PTAS), and 2240 to 2357 (PLPI…AALN). A compositionally biased stretch (polar residues) spans 2092–2105 (GSSSLTRAPSLTSD). Positions 2106 to 2126 (SEGKKPAQAVKKEPKEPKKTE) are enriched in basic and acidic residues. Positions 2126–2357 (ESWFSRWLPG…IGQRKYAALN (232 aa)) are required for interaction with SEC23A. Serine 2291 carries the post-translational modification Phosphoserine. Polar residues predominate over residues 2332 to 2343 (QLVQASVTSGNS).

Belongs to the SEC16 family. As to quaternary structure, SEC16A and SEC16B are each present in multiple copies in a heteromeric complex. Interacts with SEC23A. Interacts with RNF183, RNF152, MIA3 and SEC13. Interacts with GORASP2 in response to ER stress. Interacts with LRRK2 (via ROC domain). Interacts with RAB10.

It localises to the endoplasmic reticulum membrane. Its subcellular location is the golgi apparatus membrane. The protein resides in the cytoplasm. The protein localises to the perinuclear region. It is found in the cytosol. It localises to the microsome membrane. Functionally, acts as a molecular scaffold that plays a key role in the organization of the endoplasmic reticulum exit sites (ERES), also known as transitional endoplasmic reticulum (tER). SAR1A-GTP-dependent assembly of SEC16A on the ER membrane forms an organized scaffold defining an ERES. Required for secretory cargo traffic from the endoplasmic reticulum to the Golgi apparatus. Mediates the recruitment of MIA3/TANGO to ERES. Regulates both conventional (ER/Golgi-dependent) and GORASP2-mediated unconventional (ER/Golgi-independent) trafficking of CFTR to cell membrane. Acts as a RAB10 effector in the regulation of insulin-induced SLC2A4/GLUT4 glucose transporter-enriched vesicles delivery to the plasma membrane in adipocytes. The chain is Protein transport protein Sec16A (Sec16a) from Mus musculus (Mouse).